The primary structure comprises 710 residues: Adenylosuccinate synthetase (710 aa).

Residues 1–54 (MPVRRYGGRYNSSSPGVSNALNPSRTAGWPLSPSPATGSKPASTHHDPVPQEAY) form a disordered region. The span at 10-25 (YNSSSPGVSNALNPSR) shows a compositional bias: polar residues. Positions 44–54 (THHDPVPQEAY) are enriched in basic and acidic residues. Residues 180–186 (GDEGKGK) and 210–212 (GHT) each bind GTP. Catalysis depends on Asp181, which acts as the Proton acceptor. Residues Asp181 and Gly210 each contribute to the Mg(2+) site. IMP-binding positions include 181 to 184 (DEGK), 208 to 211 (NAGH), Thr295, Lys309, Gln421, Thr437, and Lys567. His211 (proton donor) is an active-site residue. 563–569 (AVTKKPR) provides a ligand contact to substrate. GTP contacts are provided by residues Arg569 and 697 to 699 (GNG).

The protein belongs to the adenylosuccinate synthetase family. As to quaternary structure, homodimer. Mg(2+) serves as cofactor.

The protein localises to the cytoplasm. It carries out the reaction IMP + L-aspartate + GTP = N(6)-(1,2-dicarboxyethyl)-AMP + GDP + phosphate + 2 H(+). It participates in purine metabolism; AMP biosynthesis via de novo pathway; AMP from IMP: step 1/2. Plays an important role in the salvage pathway for purine nucleotide biosynthesis. Catalyzes the first committed step in the biosynthesis of AMP from IMP. The chain is Adenylosuccinate synthetase from Leishmania major.